Here is an 824-residue protein sequence, read N- to C-terminus: Type IV secretion system protein PtlC homolog (824 aa).

Position 456-463 (456-463 (GQSGSGKT)) interacts with ATP.

Belongs to the TrbE/VirB4 family.

It localises to the cell membrane. The polypeptide is Type IV secretion system protein PtlC homolog (ptlC) (Bordetella bronchiseptica (strain ATCC BAA-588 / NCTC 13252 / RB50) (Alcaligenes bronchisepticus)).